The chain runs to 322 residues: DNA repair and recombination protein RadA (322 aa).

105-112 (GMYGSGKT) lines the ATP pocket.

The protein belongs to the eukaryotic RecA-like protein family.

Its function is as follows. Involved in DNA repair and in homologous recombination. Binds and assemble on single-stranded DNA to form a nucleoprotein filament. Hydrolyzes ATP in a ssDNA-dependent manner and promotes DNA strand exchange between homologous DNA molecules. This Methanococcus maripaludis (strain C5 / ATCC BAA-1333) protein is DNA repair and recombination protein RadA.